The chain runs to 122 residues: Large ribosomal subunit protein bL12 (122 aa).

The protein belongs to the bacterial ribosomal protein bL12 family. As to quaternary structure, homodimer. Part of the ribosomal stalk of the 50S ribosomal subunit. Forms a multimeric L10(L12)X complex, where L10 forms an elongated spine to which 2 to 4 L12 dimers bind in a sequential fashion. Binds GTP-bound translation factors.

Forms part of the ribosomal stalk which helps the ribosome interact with GTP-bound translation factors. Is thus essential for accurate translation. The polypeptide is Large ribosomal subunit protein bL12 (Cellvibrio japonicus (strain Ueda107) (Pseudomonas fluorescens subsp. cellulosa)).